The following is a 321-amino-acid chain: Ribosomal RNA small subunit methyltransferase H (321 aa).

S-adenosyl-L-methionine is bound by residues 40–42 (GGH), D60, F84, D106, and Q113.

This sequence belongs to the methyltransferase superfamily. RsmH family.

It is found in the cytoplasm. It carries out the reaction cytidine(1402) in 16S rRNA + S-adenosyl-L-methionine = N(4)-methylcytidine(1402) in 16S rRNA + S-adenosyl-L-homocysteine + H(+). Functionally, specifically methylates the N4 position of cytidine in position 1402 (C1402) of 16S rRNA. The protein is Ribosomal RNA small subunit methyltransferase H of Haemophilus influenzae (strain PittEE).